The sequence spans 471 residues: Putative multidrug resistance protein MdtD (471 aa).

Topologically, residues 1–11 (MTDLPDSTRWQ) are periplasmic. Residues 12-32 (LWIVAFGFFMQSLDTTIVNTA) traverse the membrane as a helical segment. The Cytoplasmic segment spans residues 33–48 (LPSMAQSLGESPLHMH). The helical transmembrane segment at 49–69 (MVIVSYVLTVAVMLPASGWLA) threads the bilayer. Residues 70 to 76 (DKVGVRN) lie on the Periplasmic side of the membrane. Residues 77–97 (IFFTAIVLFTLGSLFCALSAT) form a helical membrane-spanning segment. The Cytoplasmic segment spans residues 98-101 (LNEL). The helical transmembrane segment at 102 to 124 (LLARALQGVGGAMMVPVGRLTVM) threads the bilayer. Residues 125-137 (KIVPREQYMAAMT) lie on the Periplasmic side of the membrane. Residues 138–158 (FVTLPGQVGPLLGPALGGLLV) traverse the membrane as a helical segment. Residues 159–164 (EYASWH) are Cytoplasmic-facing. Residues 165 to 185 (WIFLINIPVGIIGAIATLMLM) form a helical membrane-spanning segment. At 186-196 (PNYTMQTRRFD) the chain is on the periplasmic side. The chain crosses the membrane as a helical span at residues 197-217 (LSGFLLLAVGMAVLTLALDGS). Topologically, residues 218–224 (KGTGLSP) are cytoplasmic. A helical membrane pass occupies residues 225–245 (LAIAGLAAIGVVALVLYLLHA). Over 246–262 (RNNNRALFSLKLFRTRT) the chain is Periplasmic. Residues 263–283 (FSLGLAGSFAGRIGSGMLPFM) form a helical membrane-spanning segment. Residues 284–285 (TP) lie on the Cytoplasmic side of the membrane. A helical membrane pass occupies residues 286-306 (VFLQIGLGFSPFHAGLMMIPM). Topologically, residues 307–341 (VLGSMGMKRIVVQVVNRFGYRRVLVATTLGLSLVT) are periplasmic. The chain crosses the membrane as a helical span at residues 342–362 (LLFMTTALLGWYYVLPFVLFL). The Cytoplasmic segment spans residues 363–395 (QGMVNSTRFSSMNTLTLKDLPDNLASSGNSLLS). The chain crosses the membrane as a helical span at residues 396-416 (MIMQLSMSIGVTIAGLLLGLF). Over 417–430 (GSQHVSVDSSTTQT) the chain is Periplasmic. A helical membrane pass occupies residues 431 to 451 (VFMYTWLSMALIIALPAFIFA). Residues 452–471 (RVPNDTHQNVAISRRKRSAQ) lie on the Cytoplasmic side of the membrane.

This sequence belongs to the major facilitator superfamily. TCR/Tet family.

It is found in the cell inner membrane. The sequence is that of Putative multidrug resistance protein MdtD from Escherichia fergusonii (strain ATCC 35469 / DSM 13698 / CCUG 18766 / IAM 14443 / JCM 21226 / LMG 7866 / NBRC 102419 / NCTC 12128 / CDC 0568-73).